The chain runs to 173 residues: RNA pyrophosphohydrolase (173 aa).

The Nudix hydrolase domain occupies 13-166 (PYRPCVGLMI…KRKVYEEVVA (154 aa)). A Nudix box motif is present at residues 54 to 75 (GGIDKGEEPLQAAERELYEETG).

Belongs to the Nudix hydrolase family. RppH subfamily. The cofactor is a divalent metal cation.

Accelerates the degradation of transcripts by removing pyrophosphate from the 5'-end of triphosphorylated RNA, leading to a more labile monophosphorylated state that can stimulate subsequent ribonuclease cleavage. This chain is RNA pyrophosphohydrolase, found in Mesorhizobium japonicum (strain LMG 29417 / CECT 9101 / MAFF 303099) (Mesorhizobium loti (strain MAFF 303099)).